A 282-amino-acid chain; its full sequence is Pantothenate synthetase (282 aa).

An ATP-binding site is contributed by 30 to 37 (MGALHQGH). The active-site Proton donor is His-37. Gln-61 contributes to the (R)-pantoate binding site. Beta-alanine is bound at residue Gln-61. ATP is bound at residue 149-152 (GEKD). (R)-pantoate is bound at residue Gln-155. ATP contacts are provided by residues Leu-178 and 186–189 (MSSR).

Belongs to the pantothenate synthetase family. Homodimer.

Its subcellular location is the cytoplasm. The enzyme catalyses (R)-pantoate + beta-alanine + ATP = (R)-pantothenate + AMP + diphosphate + H(+). It participates in cofactor biosynthesis; (R)-pantothenate biosynthesis; (R)-pantothenate from (R)-pantoate and beta-alanine: step 1/1. Functionally, catalyzes the condensation of pantoate with beta-alanine in an ATP-dependent reaction via a pantoyl-adenylate intermediate. This chain is Pantothenate synthetase, found in Flavobacterium psychrophilum (strain ATCC 49511 / DSM 21280 / CIP 103535 / JIP02/86).